A 339-amino-acid polypeptide reads, in one-letter code: Phenylalanine--tRNA ligase alpha subunit (339 aa).

Residue Glu-250 participates in Mg(2+) binding.

This sequence belongs to the class-II aminoacyl-tRNA synthetase family. Phe-tRNA synthetase alpha subunit type 1 subfamily. In terms of assembly, tetramer of two alpha and two beta subunits. It depends on Mg(2+) as a cofactor.

The protein resides in the cytoplasm. It carries out the reaction tRNA(Phe) + L-phenylalanine + ATP = L-phenylalanyl-tRNA(Phe) + AMP + diphosphate + H(+). The protein is Phenylalanine--tRNA ligase alpha subunit of Flavobacterium psychrophilum (strain ATCC 49511 / DSM 21280 / CIP 103535 / JIP02/86).